A 182-amino-acid chain; its full sequence is Mid1-interacting protein 1 (182 aa).

N-acetylmethionine is present on Met1. Residues Val55–Ala75 form a disordered region. Ser71, Ser74, and Ser78 each carry phosphoserine.

The protein belongs to the SPOT14 family. In terms of assembly, homodimer in the absence of THRSP. Heterodimer with THRSP. The homodimer interacts with ACACA and ACACB. Promotes polymerization of Acetyl-CoA carboxylase to form complexes that contain MID1IP1 and ACACA and/or ACACB. Interaction with THRSP interferes with ACACA binding. In terms of tissue distribution, during embryonic development, expressed mainly in the neuroepithelial midline, urogenital apparatus and digits. Detected in adult white fat, liver, heart, brain and kidney. Expressed at very low levels in lactating mammary gland.

The protein resides in the nucleus. It localises to the cytoplasm. It is found in the cytoskeleton. Functionally, plays a role in the regulation of lipogenesis in liver. Up-regulates ACACA enzyme activity. Required for efficient lipid biosynthesis, including triacylglycerol, diacylglycerol and phospholipid. Involved in stabilization of microtubules. This chain is Mid1-interacting protein 1 (Mid1ip1), found in Mus musculus (Mouse).